The primary structure comprises 1259 residues: uncharacterized protein (1259 aa).

The interval 354-410 (KLNQAGGKRNSSMNNSTQNNNSSRSNNSARNNNSVWNNNNSAWKNNNSAWNDNSSWK) is disordered. The span at 362-410 (RNSSMNNSTQNNNSSRSNNSARNNNSVWNNNNSAWKNNNSAWNDNSSWK) shows a compositional bias: low complexity.

The protein resides in the virion. This is an uncharacterized protein from Acanthamoeba polyphaga (Amoeba).